The chain runs to 20 residues: Pregnancy-associated glycoprotein 73B (20 aa).

The protein belongs to the peptidase A1 family. Post-translationally, N-glycosylated. Expressed in chorionic epithelium (trophectoderm).

It is found in the secreted. The protein localises to the extracellular space. This is Pregnancy-associated glycoprotein 73B from Bubalus bubalis (Domestic water buffalo).